Reading from the N-terminus, the 330-residue chain is Ketol-acid reductoisomerase (NADP(+)) (330 aa).

Residues 1-181 (MKMYYESDVN…GFTKAGVIET (181 aa)) form the KARI N-terminal Rossmann domain. NADP(+) contacts are provided by residues 24-27 (YGSQ), Arg47, Ser52, and 82-85 (DEIQ). Residue His107 is part of the active site. Gly133 contacts NADP(+). Residues 182–327 (TFKEETETDL…ERLRKACGLQ (146 aa)) form the KARI C-terminal knotted domain. Positions 190, 194, 226, and 230 each coordinate Mg(2+). Substrate is bound at residue Ser251.

It belongs to the ketol-acid reductoisomerase family. It depends on Mg(2+) as a cofactor.

The catalysed reaction is (2R)-2,3-dihydroxy-3-methylbutanoate + NADP(+) = (2S)-2-acetolactate + NADPH + H(+). It carries out the reaction (2R,3R)-2,3-dihydroxy-3-methylpentanoate + NADP(+) = (S)-2-ethyl-2-hydroxy-3-oxobutanoate + NADPH + H(+). It participates in amino-acid biosynthesis; L-isoleucine biosynthesis; L-isoleucine from 2-oxobutanoate: step 2/4. It functions in the pathway amino-acid biosynthesis; L-valine biosynthesis; L-valine from pyruvate: step 2/4. In terms of biological role, involved in the biosynthesis of branched-chain amino acids (BCAA). Catalyzes an alkyl-migration followed by a ketol-acid reduction of (S)-2-acetolactate (S2AL) to yield (R)-2,3-dihydroxy-isovalerate. In the isomerase reaction, S2AL is rearranged via a Mg-dependent methyl migration to produce 3-hydroxy-3-methyl-2-ketobutyrate (HMKB). In the reductase reaction, this 2-ketoacid undergoes a metal-dependent reduction by NADPH to yield (R)-2,3-dihydroxy-isovalerate. The polypeptide is Ketol-acid reductoisomerase (NADP(+)) (Methanobrevibacter smithii (strain ATCC 35061 / DSM 861 / OCM 144 / PS)).